Reading from the N-terminus, the 463-residue chain is METEQPEETFPNTETNGEFGKRPAEDMEEEQAFKRSRNTDEMVELRILLQSKNAGAVIGKGGKNIKALRTDYNASVSVPDSSGPERILSISADIETIGEILKKIIPTLEEGLQLPSPTATSQLPLESDAVECLNYQHYKGSDFDCELRLLIHQSLAGGIIGVKGAKIKELRENTQTTIKLFQECCPHSTDRVVLIGGKPDRVVECIKIILDLISESPIKGRAQPYDPNFYDETYDYGGFTMMFDDRRGRPVGFPMRGRGGFDRMPPGRGGRPMPPSRRDYDDMSPRRGPPPPPPGRGGRGGSRARNLPLPPPPPPRGGDLMAYDRRGRPGDRYDGMVGFSADETWDSAIDTWSPSEWQMAYEPQGGSGYDYSYAGGRGSYGDLGGPIITTQVTIPKDLAGSIIGKGGQRIKQIRHESGASIKIDEPLEGSEDRIITITGTQDQIQNAQYLLQNSVKQYSGKFF.

Methionine 1 carries the post-translational modification N-acetylmethionine. The segment at 1–37 (METEQPEETFPNTETNGEFGKRPAEDMEEEQAFKRSR) is disordered. Positions 1 to 276 (METEQPEETF…GRGGRPMPPS (276 aa)) are necessary for interaction with DDX1. Basic and acidic residues predominate over residues 19–37 (FGKRPAEDMEEEQAFKRSR). Lysine 34 bears the N6-acetyllysine; alternate mark. Residue lysine 34 forms a Glycyl lysine isopeptide (Lys-Gly) (interchain with G-Cter in SUMO1); alternate linkage. Residue lysine 34 forms a Glycyl lysine isopeptide (Lys-Gly) (interchain with G-Cter in SUMO2); alternate linkage. The tract at residues 35–197 (RSRNTDEMVE…STDRVVLIGG (163 aa)) is interaction with ASFV p30. Residue serine 36 is modified to Phosphoserine. Residue threonine 39 is modified to Phosphothreonine. The region spanning 42-104 (MVELRILLQS…ETIGEILKKI (63 aa)) is the KH 1 domain. Glycyl lysine isopeptide (Lys-Gly) (interchain with G-Cter in SUMO2) cross-links involve residues lysine 52 and lysine 60. 2 tandem repeats follow at residues 54-76 (AGAV…NASV) and 59-62 (GKGG). Residues 54-421 (AGAVIGKGGK…QIRHESGASI (368 aa)) form a 2 X 22 AA approximate repeats region. Residues 59 to 407 (GKGGKNIKAL…LAGSIIGKGG (349 aa)) form a 5 X 4 AA repeats of G-X-G-G region. Phosphoserine is present on residues serine 75 and serine 116. In terms of domain architecture, KH 2 spans 144 to 209 (DCELRLLIHQ…DRVVECIKII (66 aa)). Lysine 163 participates in a covalent cross-link: Glycyl lysine isopeptide (Lys-Gly) (interchain with G-Cter in SUMO1); alternate. A Glycyl lysine isopeptide (Lys-Gly) (interchain with G-Cter in SUMO2); alternate cross-link involves residue lysine 163. Lysine 198 bears the N6-acetyllysine mark. Residues 209 to 337 (ILDLISESPI…RPGDRYDGMV (129 aa)) are interaction with ZIK1. 2 positions are modified to phosphoserine: serine 214 and serine 216. Lysine 219 is covalently cross-linked (Glycyl lysine isopeptide (Lys-Gly) (interchain with G-Cter in SUMO2); alternate). Lysine 219 is subject to N6-succinyllysine; alternate. Residues 236-273 (YGGFTMMFDDRRGRPVGFPMRGRGGFDRMPPGRGGRPM) are RNA-binding RGG-box. 3 consecutive repeat copies span residues 245–250 (DRRGRP), 257–260 (GRGG), and 267–270 (GRGG). Positions 245-329 (DRRGRPVGFP…LMAYDRRGRP (85 aa)) are 2 X 6 AA approximate repeats. The tract at residues 250–329 (PVGFPMRGRG…LMAYDRRGRP (80 aa)) is disordered. Residues 252–266 (GFPMRGRGGFDRMPP) are compositionally biased toward low complexity. The segment covering 276 to 285 (SRRDYDDMSP) has biased composition (basic and acidic residues). A Phosphoserine modification is found at serine 284. The stretch at 295–298 (GRGG) is one 3-4 repeat. Position 316 is an omega-N-methylarginine (arginine 316). The 2-2 repeat unit spans residues 324–329 (DRRGRP). An Omega-N-methylarginine modification is found at arginine 377. Residue serine 379 is modified to Phosphoserine. Tyrosine 380 bears the Phosphotyrosine mark. The KH 3 domain occupies 387 to 451 (IITTQVTIPK…DQIQNAQYLL (65 aa)). Tandem repeats lie at residues 399 to 421 (AGSI…GASI) and 404 to 407 (GKGG). The residue at position 405 (lysine 405) is an N6-acetyllysine; alternate. Residue lysine 405 forms a Glycyl lysine isopeptide (Lys-Gly) (interchain with G-Cter in SUMO2); alternate linkage. Position 420 is a phosphoserine (serine 420). A Glycyl lysine isopeptide (Lys-Gly) (interchain with G-Cter in SUMO1); alternate cross-link involves residue lysine 422. Lysine 422 participates in a covalent cross-link: Glycyl lysine isopeptide (Lys-Gly) (interchain with G-Cter in SUMO2); alternate. Residue lysine 422 forms a Glycyl lysine isopeptide (Lys-Gly) (interchain with G-Cter in SUMO); alternate linkage.

In terms of assembly, identified in the spliceosome C complex. Part of a transcription inhibitory ribonucleoprotein complex composed at least of the circular RNA circZNF827, ZNF827 and HNRNPL. Interacts with RBM42 and ZIK1. Interacts with BRDT. Interacts with ANKRD28. Interacts with ASFV p30 protein. Interacts with DDX1. Interacts with MDM2; this interaction leads to ubiquitination and proteasomal degradation. Interacts with p53/TP53. Interacts with IVNS1ABP (via BACK domain); the interaction is direct. Interacts with PPIA/CYPA. (Microbial infection) Interacts with HCV core protein. Post-translationally, arg-296 and Arg-299 are dimethylated, probably to asymmetric dimethylarginine. In terms of processing, sumoylated by CBX4. Sumoylation is increased upon DNA damage, such as that produced by doxorubicin, etoposide, UV light and camptothecin, due to enhanced CBX4 phosphorylation by HIPK2 under these conditions. Ubiquitinated by MDM2. Doxorubicin treatment does not affect monoubiquitination, but slightly decreases HNRNPK poly-ubiquitination. Post-translationally, O-glycosylated (O-GlcNAcylated), in a cell cycle-dependent manner.

Its subcellular location is the cytoplasm. It localises to the nucleus. It is found in the nucleoplasm. The protein localises to the cell projection. The protein resides in the podosome. Functionally, one of the major pre-mRNA-binding proteins. Binds tenaciously to poly(C) sequences. Likely to play a role in the nuclear metabolism of hnRNAs, particularly for pre-mRNAs that contain cytidine-rich sequences. Can also bind poly(C) single-stranded DNA. Plays an important role in p53/TP53 response to DNA damage, acting at the level of both transcription activation and repression. When sumoylated, acts as a transcriptional coactivator of p53/TP53, playing a role in p21/CDKN1A and 14-3-3 sigma/SFN induction. As far as transcription repression is concerned, acts by interacting with long intergenic RNA p21 (lincRNA-p21), a non-coding RNA induced by p53/TP53. This interaction is necessary for the induction of apoptosis, but not cell cycle arrest. As part of a ribonucleoprotein complex composed at least of ZNF827, HNRNPL and the circular RNA circZNF827 that nucleates the complex on chromatin, may negatively regulate the transcription of genes involved in neuronal differentiation. The sequence is that of Heterogeneous nuclear ribonucleoprotein K (HNRNPK) from Homo sapiens (Human).